Consider the following 329-residue polypeptide: NADH-quinone oxidoreductase subunit H (329 aa).

The next 9 membrane-spanning stretches (helical) occupy residues 9–29 (LIKI…ATYI), 42–62 (GPCY…IKLF), 75–95 (FIFT…MAPI), 117–137 (IGFL…ILAG), 154–174 (IQLL…LMVV), 188–208 (GGFL…FLIA), 238–258 (LKWG…SFVI), 269–291 (WGFI…LSMW), and 309–329 (WKIM…IILI).

Belongs to the complex I subunit 1 family. As to quaternary structure, NDH-1 is composed of 14 different subunits. Subunits NuoA, H, J, K, L, M, N constitute the membrane sector of the complex.

It localises to the cell inner membrane. It catalyses the reaction a quinone + NADH + 5 H(+)(in) = a quinol + NAD(+) + 4 H(+)(out). Functionally, NDH-1 shuttles electrons from NADH, via FMN and iron-sulfur (Fe-S) centers, to quinones in the respiratory chain. The immediate electron acceptor for the enzyme in this species is believed to be ubiquinone. Couples the redox reaction to proton translocation (for every two electrons transferred, four hydrogen ions are translocated across the cytoplasmic membrane), and thus conserves the redox energy in a proton gradient. This subunit may bind ubiquinone. The polypeptide is NADH-quinone oxidoreductase subunit H (Helicobacter pylori (strain ATCC 700392 / 26695) (Campylobacter pylori)).